Here is a 341-residue protein sequence, read N- to C-terminus: Glycerol-3-phosphate dehydrogenase [NAD(P)+] 1 (341 aa).

NADPH is bound by residues Ser-17, Trp-18, Arg-37, and Lys-112. Residues Lys-112 and Gly-140 each contribute to the sn-glycerol 3-phosphate site. Ala-144 is a binding site for NADPH. Positions 195, 248, 258, 259, and 260 each coordinate sn-glycerol 3-phosphate. Lys-195 (proton acceptor) is an active-site residue. Arg-259 is a binding site for NADPH. The NADPH site is built by Val-283 and Glu-285.

It belongs to the NAD-dependent glycerol-3-phosphate dehydrogenase family.

It is found in the cytoplasm. It catalyses the reaction sn-glycerol 3-phosphate + NAD(+) = dihydroxyacetone phosphate + NADH + H(+). The enzyme catalyses sn-glycerol 3-phosphate + NADP(+) = dihydroxyacetone phosphate + NADPH + H(+). The protein operates within membrane lipid metabolism; glycerophospholipid metabolism. Functionally, catalyzes the reduction of the glycolytic intermediate dihydroxyacetone phosphate (DHAP) to sn-glycerol 3-phosphate (G3P), the key precursor for phospholipid synthesis. This Mycobacterium bovis (strain ATCC BAA-935 / AF2122/97) protein is Glycerol-3-phosphate dehydrogenase [NAD(P)+] 1.